A 128-amino-acid polypeptide reads, in one-letter code: Conopressin-conophysin (128 aa).

The first 27 residues, 1–27 (MTRSAMQMGRLTLVLCLLLLLLLTTQA), serve as a signal peptide directing secretion. A disulfide bridge links Cys-28 with Cys-33. Gly-36 carries the glycine amide modification. Positions 37-44 (GKRDVDER) are excised as a propeptide. 7 disulfide bridges follow: Cys-50–Cys-90, Cys-53–Cys-64, Cys-58–Cys-80, Cys-65–Cys-70, Cys-97–Cys-115, Cys-109–Cys-127, and Cys-116–Cys-121.

It belongs to the vasopressin/oxytocin family. In terms of tissue distribution, expressed by the venom gland.

The protein resides in the secreted. Functionally, targets vasopressin-oxytocin related receptors. Is more active on fish receptors than on their human counterparts, supporting an evolved role of this conopressin in the envenomation process. Acts as an agonist on zebrafish vasopressin receptors V1a1R (EC(50)=10.6 nM), V1a2R (EC(50)=44.06 nM, partial agonist), V2R (EC(50)=299.2 nM) and oxytocin receptor (EC(50)=353.73 nM, partial agonist). Shows a weaker activity on human receptors AVPR1B (EC(50)=51.92 nM), AVPR1A (EC(50)=123.78 nM), AVPR2 (EC(50)=299.2 nM) and oxytocin (OXTR) receptor (EC(50)=455.66 nM, partial agonist). In vivo, exhibits grooming and scratching behavior in mice, following intracerebral injection. The chain is Conopressin-conophysin from Conus geographus (Geography cone).